Consider the following 136-residue polypeptide: Large ribosomal subunit protein bL20 (136 aa).

This sequence belongs to the bacterial ribosomal protein bL20 family.

Functionally, binds directly to 23S ribosomal RNA and is necessary for the in vitro assembly process of the 50S ribosomal subunit. It is not involved in the protein synthesizing functions of that subunit. The polypeptide is Large ribosomal subunit protein bL20 (Tropheryma whipplei (strain Twist) (Whipple's bacillus)).